We begin with the raw amino-acid sequence, 167 residues long: Putative lipoprotein YteS (167 aa).

Positions 1-20 (MTKRIRTALCVIVSVLFLAS) are cleaved as a signal peptide. C21 carries N-palmitoyl cysteine lipidation. A lipid anchor (S-diacylglycerol cysteine) is attached at C21.

The protein localises to the cell membrane. May play a role in the degradation of type I rhamnogalacturonan derived from plant cell walls. The protein is Putative lipoprotein YteS (yteS) of Bacillus subtilis (strain 168).